The primary structure comprises 968 residues: uncharacterized protein (968 aa).

The chain crosses the membrane as a helical span at residues 12 to 32; sequence LIFIFSLFFLILFFLESSIGF.

To E.coli YtfN.

Its subcellular location is the membrane. This is an uncharacterized protein from Buchnera aphidicola subsp. Schizaphis graminum (strain Sg).